We begin with the raw amino-acid sequence, 162 residues long: MAPITVGDVVPDGTISFFDENDQLQTVSVHSIAAGKKVILFGVPGAFTPTCSMSHVPGFIGKAEELKSKGIDEIICFSVNDPFVMKAWGKTYPENKHVKFVADGSGEYTHLLGLELDLKDKGLGIRSRRFALLLDNLKVTVANVESGGEFTVSSAEDILKAL.

A Thioredoxin domain is found at 4–162; that stretch reads ITVGDVVPDG…SSAEDILKAL (159 aa). Cys-51 acts as the Cysteine sulfenic acid (-SOH) intermediate in catalysis.

It belongs to the peroxiredoxin family. Prx5 subfamily. In terms of assembly, monomer. In terms of tissue distribution, highly expressed in buds and flowers. Slightly expressed in green tissues. Also detected in pollen.

It is found in the cytoplasm. The enzyme catalyses [glutaredoxin]-dithiol + a hydroperoxide = [glutaredoxin]-disulfide + an alcohol + H2O. Thiol-specific peroxidase that catalyzes the reduction of hydrogen peroxide and organic hydroperoxides to water and alcohols, respectively. Plays a role in cell protection against oxidative stress by detoxifying peroxides and as sensor of hydrogen peroxide-mediated signaling events. This chain is Peroxiredoxin-2C (PRXIIC), found in Arabidopsis thaliana (Mouse-ear cress).